Here is a 436-residue protein sequence, read N- to C-terminus: Trigger factor (436 aa).

Residues 161 to 246 (EDQLNIDFVG…VNTVSEPKLP (86 aa)) form the PPIase FKBP-type domain.

It belongs to the FKBP-type PPIase family. Tig subfamily.

It localises to the cytoplasm. It catalyses the reaction [protein]-peptidylproline (omega=180) = [protein]-peptidylproline (omega=0). Its function is as follows. Involved in protein export. Acts as a chaperone by maintaining the newly synthesized protein in an open conformation. Functions as a peptidyl-prolyl cis-trans isomerase. The protein is Trigger factor of Pseudomonas syringae pv. syringae (strain B728a).